Here is a 172-residue protein sequence, read N- to C-terminus: Shikimate kinase (172 aa).

ATP is bound at residue 11–16; sequence ASGKTE. Thr-15 contributes to the Mg(2+) binding site. Residues Asp-33, Arg-57, and Gly-80 each coordinate substrate. Residue Arg-120 participates in ATP binding. Arg-142 provides a ligand contact to substrate.

The protein belongs to the shikimate kinase family. In terms of assembly, monomer. The cofactor is Mg(2+).

It is found in the cytoplasm. The catalysed reaction is shikimate + ATP = 3-phosphoshikimate + ADP + H(+). Its pathway is metabolic intermediate biosynthesis; chorismate biosynthesis; chorismate from D-erythrose 4-phosphate and phosphoenolpyruvate: step 5/7. Catalyzes the specific phosphorylation of the 3-hydroxyl group of shikimic acid using ATP as a cosubstrate. The sequence is that of Shikimate kinase from Flavobacterium psychrophilum (strain ATCC 49511 / DSM 21280 / CIP 103535 / JIP02/86).